A 282-amino-acid chain; its full sequence is ATP synthase gamma chain (282 aa).

It belongs to the ATPase gamma chain family. F-type ATPases have 2 components, CF(1) - the catalytic core - and CF(0) - the membrane proton channel. CF(1) has five subunits: alpha(3), beta(3), gamma(1), delta(1), epsilon(1). CF(0) has three main subunits: a, b and c.

The protein resides in the cell membrane. Produces ATP from ADP in the presence of a proton gradient across the membrane. The gamma chain is believed to be important in regulating ATPase activity and the flow of protons through the CF(0) complex. This Clostridium botulinum (strain Okra / Type B1) protein is ATP synthase gamma chain.